We begin with the raw amino-acid sequence, 489 residues long: MDQKFDEFIAQTESEAEIDTSSRYTTGSISPQFASPTKFKNVLPHETDTQTGQRNRVAEHQHVPKSLLNASVEESHNHPLKEDKSESRQRQVSVSNSNPSSKGMVNKRRSLIQPMMVPTTPETDRTRPQSQSNVASGNSANKNNLHPDTNHGIDINATTQTPSSMSMGNPKFSENFASLAPSSKRNSMHSRTSSSQSMAIDSSLGGSMDVNALLQSLANKELELLECKRKIDDLKKQLHMEENIYQNKANELQELKNKVSKNINVSGSNQPVFNKTSTTGRKNSRESSRRNTHVTPVKTTRNDIRQDTSLNQDMENTDDNKQSMWSKPLALFNQVDQIIQQELERTLNWDEPPTPVEETEENQEGDKSVSKSLWSFVSDLKTGLLGIEEEEDGHHTQQSNSNVNRPKNTHGQVMDNRKHANEDINLSIKEFKTTKKHLDDNSDTHLKQRSGRTAVRKTKSGNKLNFVDDSDDGDSTLEADMVEMGSFSR.

Disordered stretches follow at residues 1–199 (MDQK…QSMA), 263–321 (INVS…DDNK), 344–370 (ERTL…KSVS), 391–413 (EDGH…HGQV), and 439–477 (DDNS…DSTL). The span at 19-35 (DTSSRYTTGSISPQFAS) shows a compositional bias: polar residues. Residues 73 to 89 (EESHNHPLKEDKSESRQ) show a composition bias toward basic and acidic residues. 3 stretches are compositionally biased toward polar residues: residues 90–103 (RQVS…SSKG), 128–147 (PQSQ…NLHP), and 156–167 (NATTQTPSSMSM). Low complexity predominate over residues 182–197 (SSKRNSMHSRTSSSQS). Positions 210 to 266 (VNALLQSLANKELELLECKRKIDDLKKQLHMEENIYQNKANELQELKNKVSKNINVS) form a coiled coil. Over residues 263 to 281 (INVSGSNQPVFNKTSTTGR) the composition is skewed to polar residues. Polar residues predominate over residues 396 to 411 (TQQSNSNVNRPKNTHG). Over residues 447-460 (KQRSGRTAVRKTKS) the composition is skewed to basic residues. Residues 468-477 (DDSDDGDSTL) show a composition bias toward acidic residues.

It belongs to the TDA11 family.

It localises to the cytoplasm. The chain is Topoisomerase I damage affected protein 11 (TDA11) from Candida glabrata (strain ATCC 2001 / BCRC 20586 / JCM 3761 / NBRC 0622 / NRRL Y-65 / CBS 138) (Yeast).